Here is a 399-residue protein sequence, read N- to C-terminus: Tryptophan synthase beta chain (399 aa).

Lys-92 is subject to N6-(pyridoxal phosphate)lysine.

This sequence belongs to the TrpB family. Tetramer of two alpha and two beta chains. The cofactor is pyridoxal 5'-phosphate.

It catalyses the reaction (1S,2R)-1-C-(indol-3-yl)glycerol 3-phosphate + L-serine = D-glyceraldehyde 3-phosphate + L-tryptophan + H2O. Its pathway is amino-acid biosynthesis; L-tryptophan biosynthesis; L-tryptophan from chorismate: step 5/5. In terms of biological role, the beta subunit is responsible for the synthesis of L-tryptophan from indole and L-serine. The protein is Tryptophan synthase beta chain of Bordetella petrii (strain ATCC BAA-461 / DSM 12804 / CCUG 43448).